The primary structure comprises 488 residues: Glutamyl-tRNA(Gln) amidotransferase subunit A, mitochondrial (488 aa).

Residues K62 and S140 each act as charge relay system in the active site. Residue S164 is the Acyl-ester intermediate of the active site. A disordered region spans residues 205–228 (GHDDNDPTSITPQTRERIQDRLSR). Residues 218 to 227 (TRERIQDRLS) show a composition bias toward basic and acidic residues.

It belongs to the amidase family. GatA subfamily. As to quaternary structure, subunit of the heterotrimeric GatCAB amidotransferase (AdT) complex, composed of A, B and C subunits.

The protein resides in the mitochondrion. It carries out the reaction L-glutamyl-tRNA(Gln) + L-glutamine + ATP + H2O = L-glutaminyl-tRNA(Gln) + L-glutamate + ADP + phosphate + H(+). Allows the formation of correctly charged Gln-tRNA(Gln) through the transamidation of misacylated Glu-tRNA(Gln) in the mitochondria. The reaction takes place in the presence of glutamine and ATP through an activated gamma-phospho-Glu-tRNA(Gln). The sequence is that of Glutamyl-tRNA(Gln) amidotransferase subunit A, mitochondrial from Tuber melanosporum (strain Mel28) (Perigord black truffle).